Consider the following 128-residue polypeptide: MIMINYLVNRMDFQMASFITSGLLVIIGLYGVFFVDNVLKKIIALEILGSGVNLALIAIGYNGGTIPIKLPGVSVEVFAKESAYPLTHALVLTNIVIEASMLAVMLGVSIILYKKYKTLRSSVILKED.

Helical transmembrane passes span phenylalanine 13–valine 35, isoleucine 42–glycine 64, and leucine 90–leucine 112.

It localises to the cell membrane. This is an uncharacterized protein from Methanocaldococcus jannaschii (strain ATCC 43067 / DSM 2661 / JAL-1 / JCM 10045 / NBRC 100440) (Methanococcus jannaschii).